A 609-amino-acid chain; its full sequence is MAFRQSEHEMSVTSLDSSVELRSRSPSPQVFNPRKLRFADDDFDKDTPEGASPQHPLQQRPKLSSGEEQQLDSKIGKEGGDGDVSMSPPCQKVRALRLFSTPATPKTILQKSTTQCSNHLSAAAAAVNASRRSDDLFRLSERPRSLPLHNRKLPTQDTANVNPFTPDSLMAHNKKRCRTQFGRENLNLNVNAMQKYLLSDACDDDVTEEAGDSMREIHQQAPKRLALHDTNISRFKREFMQVNVIGVGEFGVVFQCVNRLDGCIYAIKKSKKPVAGSSFEKRALNEVWAHAVLGKHDNVVRYYSAWAEDDHMLIQNEFCDGGSLHARIQDHCLGEAELKIVLMHVIEGLRYIHSNDLVHMDLKPENIFSTMNPNAHKLVEVQPQQTKDDDGMDSVYEELRHSENLVTYKIGDLGHVTSVKEPYVEEGDCRYLPKEILHEDYSNLFKADIFSLGITLFEAAGGGPLPKNGPEWHNLRDGKVPILPSLSRDFNELIAQMMHPYPDKRPTSQSIFSHPILSAVDSKSKLQLGLELTVEKRKNEILMNKLREAKKQIKLLEQRVNLLAVTNNPDSLDGQRCLRSFTRRMRTPFSSHGKFDSISDRNKNVITNI.

The span at 1–10 (MAFRQSEHEM) shows a compositional bias: basic and acidic residues. 2 disordered regions span residues 1–88 (MAFR…SMSP) and 147–166 (PLHNRKLPTQDTANVNPFTP). Ser-23, Ser-25, and Ser-27 each carry phosphoserine. The span at 37-48 (RFADDDFDKDTP) shows a compositional bias: basic and acidic residues. A Phosphothreonine modification is found at Thr-47. Ser-52 is modified (phosphoserine). Over residues 153-165 (LPTQDTANVNPFT) the composition is skewed to polar residues. Thr-165 is subject to Phosphothreonine. The residue at position 168 (Ser-168) is a Phosphoserine. Positions 239-517 (FMQVNVIGVG…SQSIFSHPIL (279 aa)) constitute a Protein kinase domain. ATP-binding positions include 245-253 (IGVGEFGVV) and Lys-268. Asp-361 functions as the Proton acceptor in the catalytic mechanism. Mg(2+) contacts are provided by Asn-366 and Asp-412.

It belongs to the protein kinase superfamily. Ser/Thr protein kinase family. WEE1 subfamily. Mg(2+) serves as cofactor. Phosphorylated during M and G1 phases. As to expression, expressed in embryos; expression remains high in the proliferating cells of the central nervous system well after cells in the rest of the embryo have ceased dividing.

Its subcellular location is the nucleus. The enzyme catalyses L-tyrosyl-[protein] + ATP = O-phospho-L-tyrosyl-[protein] + ADP + H(+). Its activity is regulated as follows. Negatively regulated by phosphorylation in the M-phase. Acts as a negative regulator of entry into mitosis (G2 to M transition). This kinase specifically phosphorylates and inactivates cyclin B1-complexed CDC2. The chain is Wee1-like protein kinase from Drosophila melanogaster (Fruit fly).